A 594-amino-acid chain; its full sequence is (E)-beta-ocimene synthase TPS6FN (594 aa).

Positions 303, 340, 344, 489, and 492 each coordinate (2E)-geranyl diphosphate. Mg(2+) is bound by residues Asp340 and Asp344. Residues 340–344 (DDIYD) carry the DDXXD motif motif. Positions 492, 496, and 500 each coordinate Mg(2+).

This sequence belongs to the terpene synthase family. Tpsb subfamily. It depends on Mg(2+) as a cofactor. Mn(2+) is required as a cofactor. In terms of tissue distribution, expressed in glandular trichomes two to four weeks after flowering onset.

The catalysed reaction is (2E)-geranyl diphosphate = (E)-beta-ocimene + diphosphate. The enzyme catalyses (2E)-geranyl diphosphate = (Z)-beta-ocimene + diphosphate. The protein operates within secondary metabolite biosynthesis; terpenoid biosynthesis. In terms of biological role, involved in monoterpene (C10) olefins biosynthesis, constituants of cannabinoids and terpenoids-rich resins. Catalyzes mainly the conversion of (2E)-geranyl diphosphate to (E)-beta-ocimene, and also produces minor products such as (Z)-beta-ocimene. In Cannabis sativa (Hemp), this protein is (E)-beta-ocimene synthase TPS6FN.